Reading from the N-terminus, the 526-residue chain is Outer capsid protein VP5 (526 aa).

Residues 1 to 42 (MGKIIKSLSRFGKKVGNALTSNTAKKIYNTIGKAAERFAESE) form an involved in membrane permeabilization region.

Belongs to the orbivirus VP5 family.

It localises to the virion. Its function is as follows. VP5 protein is one of the two proteins (with VP2) which constitute the virus particle outer capsid. Acts as a membrane permeabilization protein that mediates release of viral particles from endosomal compartments into the cytoplasm. Permeabilization activity is probably negatively regulated by VP2 and is triggered by endosomal degradation of VP2 and exposure to low pH. The sequence is that of Outer capsid protein VP5 (Segment-6) from Bluetongue virus 13 (isolate USA) (BTV 13).